Consider the following 337-residue polypeptide: MVVQVGINGFGRIGRIVLRATESNKDVQVVAINDPFIPLDYMVYMLKYDTVHGRFDGSVEAKDGKLVVNGHAIAVSAERDPTSIPWGSAGADYVVESTGVFTTTEAASAHLKGGAKKVIISAPSADAPMFVCGVNLEAYKSEYKVISNASCTTNCLAPLAKVINDNFGIADGLMTTVHATTATQKTVDGPSHKDWRGGRAAAANIIPSSTGAAKAVGKVIPALNGKLTGMAFRVPTPDVSVVDLTVNLSKGASYDEIKQAIKKASETTMKGVLGYTSDAVVSSDFVGEVCSSVFDAAAGIQLTPTFVKLIAWYDNEYGYSNRVVDLLVHAAKVDGAL.

NAD(+)-binding positions include 12-13, Asp34, and Arg79; that span reads RI. D-glyceraldehyde 3-phosphate is bound by residues 150-152, Thr181, 210-211, and Arg233; these read SCT and TG. Cys151 serves as the catalytic Nucleophile. Residue Asn315 participates in NAD(+) binding.

It belongs to the glyceraldehyde-3-phosphate dehydrogenase family. Homotetramer.

It localises to the cytoplasm. It catalyses the reaction D-glyceraldehyde 3-phosphate + phosphate + NAD(+) = (2R)-3-phospho-glyceroyl phosphate + NADH + H(+). It functions in the pathway carbohydrate degradation; glycolysis; pyruvate from D-glyceraldehyde 3-phosphate: step 1/5. This Mucor circinelloides f. lusitanicus (Mucor racemosus var. lusitanicus) protein is Glyceraldehyde-3-phosphate dehydrogenase 1 (GPD1).